The following is a 153-amino-acid chain: Endoribonuclease YbeY (153 aa).

Zn(2+) is bound by residues H113, H117, and H123.

Belongs to the endoribonuclease YbeY family. The cofactor is Zn(2+).

It localises to the cytoplasm. Functionally, single strand-specific metallo-endoribonuclease involved in late-stage 70S ribosome quality control and in maturation of the 3' terminus of the 16S rRNA. The protein is Endoribonuclease YbeY of Aliivibrio fischeri (strain ATCC 700601 / ES114) (Vibrio fischeri).